The sequence spans 533 residues: MPHAHPADIDGHHLTPDTVAAIARGQRAAIVPEPVLGKVADARARFEQVAAANVPIYGVSTGFGELVHNWVDIEHGRALQENLLRSHCAGVGPLFSRDEVRAMMVARANALARGYSAVRPAVIEQLLKYLEAGITPAVPQVGSLGASGDLAPLSHVAITLIGEGKVLTEDGGTAPTAEVLRERGITPLALAYKEGLALINGTSAMTGVSCLLLETLRAQVQQAEIIAALALEGLSASADAFMAHGHDIAKPHPGQIRSAANMRALLADSARLSGHGELSAEMKTRAGEAKNTGTGVFIQKAYTLRCIPQVLGAVRDTLDHCATVVERELNSSNDNPLFFEDGELFHGGNFHGQQVAFAMDFLAIAATQLGVVSERRLNRLLSPHLNNNLPAFLAAANEGLSCGFAGAQYPATALIAENRTICSPASIQSVPSNGDNQDVVSMGLIAARNARRILDNNQYILALELLASCQAAELAGAVEQLAPAGRAVFAFVRERVPFLSIDRYMTDDIEAMAALLRQGALVEVVRGAGIELA.

Tyr57 (proton donor/acceptor) is an active-site residue. Residue His87 participates in substrate binding. The segment at residues 146-148 is a cross-link (5-imidazolinone (Ala-Gly)); sequence ASG. Ser147 carries the 2,3-didehydroalanine (Ser) modification. Substrate contacts are provided by Asn200 and Arg305.

This sequence belongs to the TAL/TAM family. In terms of assembly, homotetramer; dimer of dimers. Contains an active site 4-methylidene-imidazol-5-one (MIO), which is formed autocatalytically by cyclization and dehydration of residues Ala-Ser-Gly.

It carries out the reaction L-tyrosine = (E)-4-coumarate + NH4(+). The catalysed reaction is L-tyrosine = 3-amino-3-(4-hydroxyphenyl)propanoate. Functionally, has ammonia-lyase and, to a lesser extent, aminomutase activity. Catalyzes the rearrangement of L-tyrosine to R-beta-tyrosine and S-beta-tyrosine. Does not accept L-histidine or L-phenylalanine as substrates. The protein is Tyrosine ammonia-lyase of Cupriavidus metallidurans (strain ATCC 43123 / DSM 2839 / NBRC 102507 / CH34) (Ralstonia metallidurans).